We begin with the raw amino-acid sequence, 157 residues long: SsrA-binding protein (157 aa).

Positions 132–157 (KLHDKRETEKKRDWSREKGRLLRSRG) are disordered. Over residues 135–151 (DKRETEKKRDWSREKGR) the composition is skewed to basic and acidic residues.

The protein belongs to the SmpB family.

It is found in the cytoplasm. In terms of biological role, required for rescue of stalled ribosomes mediated by trans-translation. Binds to transfer-messenger RNA (tmRNA), required for stable association of tmRNA with ribosomes. tmRNA and SmpB together mimic tRNA shape, replacing the anticodon stem-loop with SmpB. tmRNA is encoded by the ssrA gene; the 2 termini fold to resemble tRNA(Ala) and it encodes a 'tag peptide', a short internal open reading frame. During trans-translation Ala-aminoacylated tmRNA acts like a tRNA, entering the A-site of stalled ribosomes, displacing the stalled mRNA. The ribosome then switches to translate the ORF on the tmRNA; the nascent peptide is terminated with the 'tag peptide' encoded by the tmRNA and targeted for degradation. The ribosome is freed to recommence translation, which seems to be the essential function of trans-translation. The polypeptide is SsrA-binding protein (Rhodopseudomonas palustris (strain ATCC BAA-98 / CGA009)).